A 229-amino-acid polypeptide reads, in one-letter code: Large ribosomal subunit protein uL1 (229 aa).

It belongs to the universal ribosomal protein uL1 family. As to quaternary structure, part of the 50S ribosomal subunit.

Binds directly to 23S rRNA. The L1 stalk is quite mobile in the ribosome, and is involved in E site tRNA release. In terms of biological role, protein L1 is also a translational repressor protein, it controls the translation of the L11 operon by binding to its mRNA. This Chlorobium luteolum (strain DSM 273 / BCRC 81028 / 2530) (Pelodictyon luteolum) protein is Large ribosomal subunit protein uL1.